Reading from the N-terminus, the 255-residue chain is Keratin-associated protein 10-2 (255 aa).

Tandem repeats lie at residues 26-30 (CCELP), 36-40 (CCAPA), 57-61 (CCQAA), 79-83 (CCQQS), 89-93 (CCTSS), 99-103 (CCVPV), 104-108 (CCKPV), 109-113 (CCVPV), 114-118 (CCGAS), 120-124 (CCQQS), 130-134 (CCASS), 145-149 (CCKAV), 150-154 (CCVPT), 162-166 (CCQQS), 172-176 (CCTSS), 182-186 (CCVSV), 187-191 (CCKPV), 192-196 (CCKSI), 197-201 (CCVPV), 209-213 (CCQQS), 219-223 (CCTSS), and 224-228 (CCRPS). Residues 26–228 (CCELPCGTPS…CCTSSCCRPS (203 aa)) are 22 X 5 AA repeats of C-C-X(3).

It belongs to the KRTAP type 10 family. As to quaternary structure, interacts with hair keratins. In terms of tissue distribution, restricted to a narrow region of the hair fiber cuticle, lying approximately 20 cell layers above the apex of the dermal papilla of the hair root; not detected in any other tissues.

Functionally, in the hair cortex, hair keratin intermediate filaments are embedded in an interfilamentous matrix, consisting of hair keratin-associated proteins (KRTAP), which are essential for the formation of a rigid and resistant hair shaft through their extensive disulfide bond cross-linking with abundant cysteine residues of hair keratins. The matrix proteins include the high-sulfur and high-glycine-tyrosine keratins. The protein is Keratin-associated protein 10-2 (KRTAP10-2) of Homo sapiens (Human).